A 647-amino-acid polypeptide reads, in one-letter code: Threonine--tRNA ligase (647 aa).

A TGS domain is found at 1–61; that stretch reads MIKITFPDGA…TEDGSIEIVT (61 aa). Residues 242–540 form a catalytic region; it reads DHRKLGKELD…LIENYKGAFP (299 aa). Residues Cys-336, His-387, and His-517 each contribute to the Zn(2+) site.

Belongs to the class-II aminoacyl-tRNA synthetase family. As to quaternary structure, homodimer. Zn(2+) is required as a cofactor.

The protein localises to the cytoplasm. The catalysed reaction is tRNA(Thr) + L-threonine + ATP = L-threonyl-tRNA(Thr) + AMP + diphosphate + H(+). Its function is as follows. Catalyzes the attachment of threonine to tRNA(Thr) in a two-step reaction: L-threonine is first activated by ATP to form Thr-AMP and then transferred to the acceptor end of tRNA(Thr). Also edits incorrectly charged L-seryl-tRNA(Thr). The chain is Threonine--tRNA ligase from Streptococcus gordonii (strain Challis / ATCC 35105 / BCRC 15272 / CH1 / DL1 / V288).